Reading from the N-terminus, the 379-residue chain is Wnt inhibitory factor 1 (379 aa).

An N-terminal signal peptide occupies residues 1 to 28 (MARRSAFPAAALWLWSILLCLLALRAEA). Residues 38 to 177 (LWIDAHQARV…PQNAIFFKTC (140 aa)) form the WIF domain. Asn88 carries N-linked (GlcNAc...) asparagine glycosylation. Intrachain disulfides connect Cys140–Cys177, Cys182–Cys192, Cys186–Cys198, Cys200–Cys209, Cys214–Cys224, Cys218–Cys230, and Cys232–Cys241. 5 consecutive EGF-like domains span residues 178–210 (QQAECPGGCRNGGFCNERRICECPDGFHGPHCE), 211–242 (KALCTPRCMNGGLCVTPGFCICPPGFYGVNCD), 243–271 (KANCSTTCFNGGTCFYPGKCICPPGLEGE), 274–306 (EISKCPQPCRNGGKCIGKSKCKCSKGYQGDLCS), and 307–338 (KPVCEPGCGAHGTCHEPNKCQCQEGWHGRHCN). Residue Asn245 is glycosylated (N-linked (GlcNAc...) asparagine). Cystine bridges form between Cys246–Cys256, Cys250–Cys262, Cys278–Cys288, Cys282–Cys294, Cys296–Cys305, Cys310–Cys320, Cys314–Cys326, and Cys328–Cys337. The tract at residues 354–379 (AQLRQHTPSLKKAEERRDPPESNYIW) is disordered. Residues 364 to 373 (KKAEERRDPP) are compositionally biased toward basic and acidic residues.

As to quaternary structure, interacts with MYOC.

The protein localises to the secreted. Binds to WNT proteins and inhibits their activities. May be involved in mesoderm segmentation. This chain is Wnt inhibitory factor 1 (WIF1), found in Homo sapiens (Human).